The chain runs to 547 residues: Riboflavin transporter RibJ (547 aa).

Topologically, residues 1–11 (MLPSFTRKPAD) are cytoplasmic. The helical transmembrane segment at 12–32 (HPIGYLVALSGLLMQLMSYGI) threads the bilayer. The Extracellular portion of the chain corresponds to 33–58 (DNSYSIFSEDMHNDPSLGFPSITAIS). A helical transmembrane segment spans residues 59 to 79 (LGNSVSLGLSPAFGVLAGFCV). The Cytoplasmic portion of the chain corresponds to 80–85 (DRLPPR). The helical transmembrane segment at 86–106 (FMMALSTILLFTGLWISSTLA) threads the bilayer. Over 107 to 108 (AN) the chain is Extracellular. A helical transmembrane segment spans residues 109-129 (IYVVTFTYCLFASIGTACMLS). At 130 to 144 (PGAAATSSWFNRYQG) the chain is on the cytoplasmic side. A helical membrane pass occupies residues 145-165 (LAMGINFAGGGIGSAIIPPLA). Topologically, residues 166-175 (GKWVVAYGWR) are extracellular. The helical transmembrane segment at 176–196 (KAFQLMSIFCAIGVLATALSA) threads the bilayer. At 197–344 (RRREPKRDDS…MFTLPFMGNF (148 aa)) the chain is on the cytoplasmic side. Residues 198 to 293 (RREPKRDDSS…EGLDVTEQSQ (96 aa)) form a disordered region. A compositionally biased stretch (basic and acidic residues) spans 244-255 (NEGKEDVREMGR). A helical membrane pass occupies residues 345-365 (LCWFIYSWAFYSLIYAAVPYI). Residues 366-386 (SSMGKPGTVYAGVPPIPTDVA) are Extracellular-facing. The chain crosses the membrane as a helical span at residues 387–407 (ATLFTFYGVFQVVGSVLVGWL). At 408–412 (ASLVT) the chain is on the cytoplasmic side. The chain crosses the membrane as a helical span at residues 413–433 (AEFAYVFCATVGGIGCGLLAL). Topologically, residues 434 to 437 (GRSY) are extracellular. A helical membrane pass occupies residues 438 to 458 (VAFALLLCIIGFCMAGMFAVM). Over 459–470 (PTLIATHLYGPN) the chain is Cytoplasmic. Residues 471 to 491 (LGFYFGAVFLAGVVGGFVAPP) form a helical membrane-spanning segment. Residues 492 to 505 (MQATIQLRNNGSYA) are Extracellular-facing. Residue Asn-501 is glycosylated (N-linked (GlcNAc...) asparagine). Residues 506–526 (FVCVVMSVSMTLSALVCYATL) form a helical membrane-spanning segment. The Cytoplasmic segment spans residues 527–547 (WRSKRSGIVLAARKTKLVEIM).

Belongs to the major facilitator superfamily. RibJ family.

The protein resides in the cell membrane. Transporter involved in riboflavin (vitamin B2) uptake. Also transports FMN and FAD. In Trypanosoma brucei brucei (strain 927/4 GUTat10.1), this protein is Riboflavin transporter RibJ.